Reading from the N-terminus, the 209-residue chain is FMN-dependent NADH:quinone oxidoreductase 2 (209 aa).

17-19 lines the FMN pocket; the sequence is SAS.

Belongs to the azoreductase type 1 family. In terms of assembly, homodimer. It depends on FMN as a cofactor.

The catalysed reaction is 2 a quinone + NADH + H(+) = 2 a 1,4-benzosemiquinone + NAD(+). It catalyses the reaction N,N-dimethyl-1,4-phenylenediamine + anthranilate + 2 NAD(+) = 2-(4-dimethylaminophenyl)diazenylbenzoate + 2 NADH + 2 H(+). Quinone reductase that provides resistance to thiol-specific stress caused by electrophilic quinones. Functionally, also exhibits azoreductase activity. Catalyzes the reductive cleavage of the azo bond in aromatic azo compounds to the corresponding amines. This chain is FMN-dependent NADH:quinone oxidoreductase 2, found in Lactiplantibacillus plantarum (strain ATCC BAA-793 / NCIMB 8826 / WCFS1) (Lactobacillus plantarum).